A 430-amino-acid chain; its full sequence is Serine--tRNA ligase (430 aa).

231-233 (TSE) lines the L-serine pocket. Residue 262–264 (RSE) coordinates ATP. Glutamate 285 provides a ligand contact to L-serine. Residue 349-352 (EISS) participates in ATP binding. L-serine is bound at residue serine 385.

This sequence belongs to the class-II aminoacyl-tRNA synthetase family. Type-1 seryl-tRNA synthetase subfamily. As to quaternary structure, homodimer. The tRNA molecule binds across the dimer.

The protein resides in the cytoplasm. It catalyses the reaction tRNA(Ser) + L-serine + ATP = L-seryl-tRNA(Ser) + AMP + diphosphate + H(+). It carries out the reaction tRNA(Sec) + L-serine + ATP = L-seryl-tRNA(Sec) + AMP + diphosphate + H(+). Its pathway is aminoacyl-tRNA biosynthesis; selenocysteinyl-tRNA(Sec) biosynthesis; L-seryl-tRNA(Sec) from L-serine and tRNA(Sec): step 1/1. Its function is as follows. Catalyzes the attachment of serine to tRNA(Ser). Is also able to aminoacylate tRNA(Sec) with serine, to form the misacylated tRNA L-seryl-tRNA(Sec), which will be further converted into selenocysteinyl-tRNA(Sec). This chain is Serine--tRNA ligase, found in Ruegeria pomeroyi (strain ATCC 700808 / DSM 15171 / DSS-3) (Silicibacter pomeroyi).